Consider the following 300-residue polypeptide: GTPase Era (300 aa).

Positions 8-176 (RCGYVAIVGR…ESLIASHLPE (169 aa)) constitute an Era-type G domain. The segment at 16–23 (GRPNVGKS) is G1. Position 16–23 (16–23 (GRPNVGKS)) interacts with GTP. The interval 42–46 (QTTRH) is G2. A G3 region spans residues 63–66 (DTPG). GTP contacts are provided by residues 63–67 (DTPGM) and 125–128 (NKTD). Residues 125 to 128 (NKTD) are G4. Residues 155–157 (ISA) are G5. The 85-residue stretch at 199 to 283 (VREKIMRQLG…MLNLWVKVKG (85 aa)) folds into the KH type-2 domain.

It belongs to the TRAFAC class TrmE-Era-EngA-EngB-Septin-like GTPase superfamily. Era GTPase family. As to quaternary structure, monomer.

Its subcellular location is the cytoplasm. The protein localises to the cell inner membrane. Functionally, an essential GTPase that binds both GDP and GTP, with rapid nucleotide exchange. Plays a role in 16S rRNA processing and 30S ribosomal subunit biogenesis and possibly also in cell cycle regulation and energy metabolism. In Pseudomonas savastanoi pv. phaseolicola (strain 1448A / Race 6) (Pseudomonas syringae pv. phaseolicola (strain 1448A / Race 6)), this protein is GTPase Era.